A 464-amino-acid polypeptide reads, in one-letter code: Keratin, type I cytoskeletal 28 (464 aa).

The segment at 1-85 is head; it reads MSLQFSNGSR…GSEGGLLSGN (85 aa). The segment at 86–121 is coil 1A; sequence EKVTMQNLNDRLASYLDNVRALEEANAELERKIKGW. Residues 86–401 enclose the IF rod domain; sequence EKVTMQNLND…RLIDGDGNSC (316 aa). The tract at residues 122 to 143 is linker 1; it reads YEKYGPGSCRGLDHDYSRYHLT. The tract at residues 144-235 is coil 1B; it reads IEDLKNKIIS…KNHEEEMKAL (92 aa). Residues 236–258 form a linker 12 region; it reads QCAAGGNVNVEMNAAPGVDLAVL. The segment at 259–397 is coil 2; sequence LNNMRAEYEA…ETYCRLIDGD (139 aa). The tail stretch occupies residues 398 to 464; sequence GNSCSKSKGF…NGKTEQRVPF (67 aa). The segment at 443–464 is disordered; it reads IHSIEEKTSKMTNGKTEQRVPF.

It belongs to the intermediate filament family. In terms of assembly, heterotetramer of two type I and two type II keratins. In terms of tissue distribution, strongly expressed in skin and scalp, and weak expression observed in thymus. In the hair follicle, expressed in Henle layer, Huxley layer and in the irs cuticle. Expression extends from the bulb region up to the point of differentiation into the three layers. Also present in the medulla of beard hair (at protein level).

The protein resides in the cytoplasm. Its function is as follows. Essential for the proper assembly of types I and II keratin protein complexes and the formation of keratin intermediate filaments in the inner root sheath (irs). This chain is Keratin, type I cytoskeletal 28, found in Homo sapiens (Human).